The sequence spans 413 residues: Multifunctional CCA protein (413 aa).

G8 and R11 together coordinate ATP. Residues G8 and R11 each contribute to the CTP site. Residues D21 and D23 each contribute to the Mg(2+) site. The ATP site is built by R91, R137, and R140. Residues R91, R137, and R140 each contribute to the CTP site. The HD domain occupies 228-329 (TGVHTLMTLS…VKLFDAIDAW (102 aa)).

The protein belongs to the tRNA nucleotidyltransferase/poly(A) polymerase family. Bacterial CCA-adding enzyme type 1 subfamily. In terms of assembly, monomer. Can also form homodimers and oligomers. The cofactor is Mg(2+). Requires Ni(2+) as cofactor.

It catalyses the reaction a tRNA precursor + 2 CTP + ATP = a tRNA with a 3' CCA end + 3 diphosphate. The enzyme catalyses a tRNA with a 3' CCA end + 2 CTP + ATP = a tRNA with a 3' CCACCA end + 3 diphosphate. Functionally, catalyzes the addition and repair of the essential 3'-terminal CCA sequence in tRNAs without using a nucleic acid template. Adds these three nucleotides in the order of C, C, and A to the tRNA nucleotide-73, using CTP and ATP as substrates and producing inorganic pyrophosphate. tRNA 3'-terminal CCA addition is required both for tRNA processing and repair. Also involved in tRNA surveillance by mediating tandem CCA addition to generate a CCACCA at the 3' terminus of unstable tRNAs. While stable tRNAs receive only 3'-terminal CCA, unstable tRNAs are marked with CCACCA and rapidly degraded. The sequence is that of Multifunctional CCA protein from Salmonella typhi.